Consider the following 826-residue polypeptide: Dolichyl-diphosphooligosaccharide--protein glycosyltransferase subunit STT3B (826 aa).

The tract at residues 1-60 (MAEPSAPESKHKSSLNSSPWSGLMALGNSRHGHHGPGAQCAHKAAGGVAPPKPAPAGLSG) is disordered. Alanine 2 is modified (N-acetylalanine). Residues 2-41 (AEPSAPESKHKSSLNSSPWSGLMALGNSRHGHHGPGAQCA) lie on the Cytoplasmic side of the membrane. A phosphoserine mark is found at serine 13, serine 18, and serine 29. A helical membrane pass occupies residues 42-86 (HKAAGGVAPPKPAPAGLSGGLSQPAGWQSLLSFTILFLAWLAGFS). Over 87–173 (SRLFAVIRFE…VHIRDVCVFL (87 aa)) the chain is Lumenal. The DXD motif 1 signature appears at 101-103 (EFD). Aspartate 103 is a binding site for Mn(2+). Residues 174–192 (APTFSGLTSISTFLLTREL) traverse the membrane as a helical segment. At 193–194 (WN) the chain is on the cytoplasmic side. The chain crosses the membrane as a helical span at residues 195 to 212 (QGAGLLAACFIAIVPGYI). At 213–223 (SRSVAGSFDNE) the chain is on the lumenal side. Positions 221 and 223 each coordinate Mn(2+). Residues 221 to 223 (DNE) carry the DXD motif 2 motif. The chain crosses the membrane as a helical span at residues 224 to 243 (GIAIFALQFTYYLWVKSVKT). Topologically, residues 244–245 (GS) are cytoplasmic. Residues 246–260 (VFWTMCCCLSYFYMV) form a helical membrane-spanning segment. Residues 261–265 (SAWGG) lie on the Lumenal side of the membrane. Residues 266-282 (YVFIINLIPLHVFVLLL) traverse the membrane as a helical segment. Residues 283–287 (MQRYS) lie on the Cytoplasmic side of the membrane. A helical transmembrane segment spans residues 288-313 (KRVYIAYSTFYIVGLILSMQIPFVGF). The Lumenal segment spans residues 314–321 (QPIRTSEH). Residues 322 to 341 (MAAAGVFALLQAYAFLQYLR) form a helical membrane-spanning segment. Residues 342-350 (DRLTKQEFQ) lie on the Cytoplasmic side of the membrane. The chain crosses the membrane as a helical span at residues 351 to 371 (TLFFLGVSLAAGAVFLSVIYL). The Lumenal segment spans residues 372–410 (TYTGYIAPWSGRFYSLWDTGYAKIHIPIIASVSEHQPTT). Positions 402-405 (SVSE) match the SVSE motif motif. Residues 411 to 433 (WVSFFFDLHILVCTFPAGLWFCI) form a helical membrane-spanning segment. Over 434-439 (KNINDE) the chain is Cytoplasmic. The chain crosses the membrane as a helical span at residues 440–456 (RVFVALYAISAVYFAGV). The Lumenal portion of the chain corresponds to 457–460 (MVRL). Arginine 459 lines the dolichyl diphosphooligosaccharide pocket. The helical transmembrane segment at 461 to 482 (MLTLTPVVCMLSAIAFSNVFEH) threads the bilayer. Topologically, residues 483-526 (YLGDDMKRENPPVEDSSDEDDKRNPGNLYDKAGKVRKHVTEQEK) are cytoplasmic. Residues 490–512 (RENPPVEDSSDEDDKRNPGNLYD) are disordered. Phosphoserine occurs at positions 498 and 499. A helical transmembrane segment spans residues 527-552 (TEEGLGPNIKSIVTMLMLMLLMMFAV). Residues 553–826 (HCTWVTSNAY…KGKKISKKTV (274 aa)) are Lumenal-facing. Residues 604–606 (WWD) form an interacts with target acceptor peptide in protein substrate region. The WWDYG motif signature appears at 604–608 (WWDYG). Tyrosine 609 lines the dolichyl diphosphooligosaccharide pocket. N-linked (GlcNAc...) asparagine glycans are attached at residues asparagine 616 and asparagine 623. N-linked (GlcNAc...) (high mannose) asparagine glycosylation occurs at asparagine 627. The N-linked (GlcNAc...) asparagine glycan is linked to asparagine 641. The short motif at 671-678 (DINKFLWM) is the DK motif element.

The protein belongs to the STT3 family. Component of the oligosaccharyltransferase (OST) complex. There are 2 OST complexes, OST-A and OST-B, which contain STT3A or STT3B as catalytic subunit, respectively. OST-A and OST-B contain common core subunits RPN1, RPN2, OST48, OST4, DAD1 and TMEM258, and OST-B contains either MAGT1 or TUSC3 as specific accessory subunit. Mg(2+) is required as a cofactor. Mn(2+) serves as cofactor.

The protein localises to the endoplasmic reticulum. The protein resides in the endoplasmic reticulum membrane. The catalysed reaction is a di-trans,poly-cis-dolichyl diphosphooligosaccharide + L-asparaginyl-[protein] = N(4)-(oligosaccharide-(1-&gt;4)-N-acetyl-beta-D-glucosaminyl-(1-&gt;4)-N-acetyl-beta-D-glucosaminyl)-L-asparaginyl-[protein] + a di-trans,poly-cis-dolichyl diphosphate + H(+). It functions in the pathway protein modification; protein glycosylation. In terms of biological role, catalytic subunit of the oligosaccharyl transferase (OST) complex that catalyzes the initial transfer of a defined glycan (Glc(3)Man(9)GlcNAc(2) in eukaryotes) from the lipid carrier dolichol-pyrophosphate to an asparagine residue within an Asn-X-Ser/Thr consensus motif in nascent polypeptide chains, the first step in protein N-glycosylation. N-glycosylation occurs cotranslationally and the complex associates with the Sec61 complex at the channel-forming translocon complex that mediates protein translocation across the endoplasmic reticulum (ER). All subunits are required for a maximal enzyme activity. This subunit contains the active site and the acceptor peptide and donor lipid-linked oligosaccharide (LLO) binding pockets. STT3B is present in a small subset of OST complexes and mediates both cotranslational and post-translational N-glycosylation of target proteins: STT3B-containing complexes are required for efficient post-translational glycosylation and while they are less competent than STT3A-containing complexes for cotranslational glycosylation, they have the ability to mediate glycosylation of some nascent sites that are not accessible for STT3A. STT3B-containing complexes also act post-translationally and mediate modification of skipped glycosylation sites in unfolded proteins. Plays a role in ER-associated degradation (ERAD) pathway that mediates ubiquitin-dependent degradation of misfolded endoplasmic reticulum proteins by mediating N-glycosylation of unfolded proteins, which are then recognized by the ERAD pathway and targeted for degradation. The sequence is that of Dolichyl-diphosphooligosaccharide--protein glycosyltransferase subunit STT3B from Canis lupus familiaris (Dog).